The following is a 592-amino-acid chain: Nucleolar protein 58 (592 aa).

The Nop domain occupies I285–G410. The segment at D443–E592 is disordered. Basic and acidic residues predominate over residues D450–E462. The span at E463–P478 shows a compositional bias: acidic residues. Composition is skewed to basic and acidic residues over residues G505–E515 and K557–D571. Over residues K582 to E592 the composition is skewed to basic residues.

It belongs to the NOP5/NOP56 family.

It localises to the nucleus. Its subcellular location is the nucleolus. Required for pre-18S rRNA processing. May bind microtubules. This chain is Nucleolar protein 58 (nop58), found in Aspergillus clavatus (strain ATCC 1007 / CBS 513.65 / DSM 816 / NCTC 3887 / NRRL 1 / QM 1276 / 107).